Consider the following 583-residue polypeptide: MDAILPVPVDGFRFDTGSGSCCKPRNNLESGTTNRFTCFNESESQSNPSPTESKVCSDYLPVFKYINDMLMEEDLEGQSCMLEDSLALQAAERSFFEVLQDQTPISGDLEDGSLGNFSSITSLHQPEVSEESTRRYRHRDDDEDDDLESGRKSKLPAISTVDELAEKFEEVLLVCQKNDQGEATEKKTRHVKGSSNRYKQQKSDQPVDMRNLLMQCAQAVASFDQRRAFEKLKEIREHSSRHGDATQRLGYHFAEALEARITGTMTTPISATSSRTSMVDILKAYKGFVQACPTLIMCYFTANRTINELASKATTLHIIDFGILYGFQWPCLIQALSKRDIGPPLLRVTGIELPQSGFRPSERVEETGRRLKRFCDKFNVPFEYSFIAKNWENITLDDLVINSGETTVVNCILRLQYTPDETVSLNSPRDTALKLFRDINPDLFVFAEINGTYNSPFFLTRFREALFHCSSLFDMYETTLSEDDNCRTLVERELIIRDAMSVIACEGSERFARPETYKQWQVRILRAGFRPAKLSKQIVKDGKEIVKERYHKDFVIDNDNHWMFQGWKGRVLYAVSCWKPAKK.

Disordered stretches follow at residues 107 to 154 (GDLE…RKSK) and 182 to 205 (EATEKKTRHVKGSSNRYKQQKSDQ). Polar residues predominate over residues 115–124 (GNFSSITSLH). Over residues 131–140 (ESTRRYRHRD) the composition is skewed to basic and acidic residues. The 380-residue stretch at 200–579 (QQKSDQPVDM…RVLYAVSCWK (380 aa)) folds into the GRAS domain. Residues 207 to 266 (VDMRNLLMQCAQAVASFDQRRAFEKLKEIREHSSRHGDATQRLGYHFAEALEARITGTMT) form a leucine repeat I (LRI) region. Positions 285–350 (YKGFVQACPT…IGPPLLRVTG (66 aa)) are VHIID. Residues 316–320 (LHIID) carry the VHIID motif. The interval 366-398 (ETGRRLKRFCDKFNVPFEYSFIAKNWENITLDD) is leucine repeat II (LRII). Residues 407-501 (TVVNCILRLQ…RELIIRDAMS (95 aa)) form a PFYRE region. The SAW stretch occupies residues 504–579 (ACEGSERFAR…RVLYAVSCWK (76 aa)).

The protein belongs to the GRAS family. As to quaternary structure, interacts with SNRNP35 and CYP95. In terms of tissue distribution, expressed in seedlings, leaves, sepals, stamen and pistil, and in the quiescent center of root meristem.

It is found in the nucleus. In terms of biological role, probable transcription factor involved in plant development. The sequence is that of Scarecrow-like protein 30 (SCL30) from Arabidopsis thaliana (Mouse-ear cress).